The following is a 310-amino-acid chain: Probable endonuclease 4 (310 aa).

Positions Met-1 to Val-31 are disordered. Zn(2+)-binding residues include His-94, His-134, Glu-173, Asp-207, His-210, His-244, Asp-257, His-259, and Glu-289.

Belongs to the AP endonuclease 2 family. It depends on Zn(2+) as a cofactor.

The catalysed reaction is Endonucleolytic cleavage to 5'-phosphooligonucleotide end-products.. Endonuclease IV plays a role in DNA repair. It cleaves phosphodiester bonds at apurinic or apyrimidinic (AP) sites, generating a 3'-hydroxyl group and a 5'-terminal sugar phosphate. This is Probable endonuclease 4 from Streptomyces avermitilis (strain ATCC 31267 / DSM 46492 / JCM 5070 / NBRC 14893 / NCIMB 12804 / NRRL 8165 / MA-4680).